We begin with the raw amino-acid sequence, 138 residues long: Hydrogenase maturation factor HypA (138 aa).

H2 contacts Ni(2+). The Zn(2+) site is built by C73, C76, C110, and C113.

The protein belongs to the HypA/HybF family.

Functionally, involved in the maturation of [NiFe] hydrogenases. Required for nickel insertion into the metal center of the hydrogenase. This Thermococcus sibiricus (strain DSM 12597 / MM 739) protein is Hydrogenase maturation factor HypA.